We begin with the raw amino-acid sequence, 84 residues long: Large ribosomal subunit protein eL34 (84 aa).

Belongs to the eukaryotic ribosomal protein eL34 family.

This chain is Large ribosomal subunit protein eL34 (ribL34e), found in Pyrobaculum aerophilum (strain ATCC 51768 / DSM 7523 / JCM 9630 / CIP 104966 / NBRC 100827 / IM2).